The primary structure comprises 336 residues: HTH-type transcriptional regulator SyrM (336 aa).

An HTH lysR-type domain is found at 41–98; the sequence is IDLNLLVALEALLEYRNVTHAGQHIGRSQPAMSRALGRLRGLFNDDLLVRSSTGLIPT. Residues 58–77 constitute a DNA-binding region (H-T-H motif); it reads VTHAGQHIGRSQPAMSRALG.

This sequence belongs to the LysR transcriptional regulatory family.

Functionally, acts in trans to stimulate nod gene expression via nodD3 and exo gene expression via SyrA. In Rhizobium etli, this protein is HTH-type transcriptional regulator SyrM (syrM).